Consider the following 88-residue polypeptide: UPF0335 protein M446_5200 (88 aa).

The protein belongs to the UPF0335 family.

This is UPF0335 protein M446_5200 from Methylobacterium sp. (strain 4-46).